We begin with the raw amino-acid sequence, 586 residues long: Kinesin-like protein KIF25 (586 aa).

Positions 10-94 form a coiled coil; the sequence is SFWEQRTRQL…VIQKLNQDIQ (85 aa). Positions 173 to 565 constitute a Kinesin motor domain; sequence NIRVHCRIRP…LGFGIRARQV (393 aa). Residue 267 to 274 participates in ATP binding; it reads GQTGSGKS. Disordered regions lie at residues 417–460 and 564–586; these read TADQ…AGRA and QVQR…RRPD.

It belongs to the TRAFAC class myosin-kinesin ATPase superfamily. Kinesin family. Homotetramer.

The protein resides in the cytoplasm. The protein localises to the cytoskeleton. Its subcellular location is the microtubule organizing center. It localises to the centrosome. Its function is as follows. Minus-end microtubule-dependent motor protein. Acts as a negative regulator of centrosome separation required to prevent premature centrosome separation during interphase. Required to maintain a centered nucleus to ensure that the spindle is stably oriented at the onset of mitosis. May also act as a negative regulator of amino acid starvation-induced autophagy. This Macaca fascicularis (Crab-eating macaque) protein is Kinesin-like protein KIF25.